The following is a 273-amino-acid chain: Putative cysteine-rich repeat secretory protein 40 (273 aa).

The signal sequence occupies residues 1–32 (MYPSCSLLQRLVWFPFLALVATQLLFIRNVSS). Gnk2-homologous domains lie at 39–141 (YLHH…SISV) and 151–264 (YENN…LYPF).

The protein belongs to the cysteine-rich repeat secretory protein family.

It is found in the secreted. The protein is Putative cysteine-rich repeat secretory protein 40 (CRRSP40) of Arabidopsis thaliana (Mouse-ear cress).